An 87-amino-acid chain; its full sequence is U3-theraphotoxin-Hhn1a 5 (87 aa).

The first 24 residues, 1-24 (MVNMKASMFLTFAGLVLLFVVCYA), serve as a signal peptide directing secretion. The propeptide occupies 25–52 (SESEEKEFPKEMLSSIFAVDNDFKQEER). Disulfide bonds link Cys-54/Cys-67, Cys-61/Cys-72, and Cys-66/Cys-79.

It belongs to the neurotoxin 10 (Hwtx-1) family. 51 (Hntx-8) subfamily. Hntx-8 sub-subfamily. In terms of tissue distribution, expressed by the venom gland.

The protein localises to the secreted. Its function is as follows. Ion channel inhibitor. The chain is U3-theraphotoxin-Hhn1a 5 from Cyriopagopus hainanus (Chinese bird spider).